The chain runs to 174 residues: Gamma-crystallin C (174 aa).

Beta/gamma crystallin 'Greek key' domains lie at 2–40 and 41–83; these read GKITLYEDKAFQGRSYESTTDCPNLQTYLSRCNSIRVES and GCWM…CLIP. Cys23 carries the post-translational modification S-methylcysteine. A connecting peptide region spans residues 84–87; sequence QTGS. Beta/gamma crystallin 'Greek key' domains lie at 88–128 and 129–171; these read HRLR…HVLE and GCWV…RRVV.

This sequence belongs to the beta/gamma-crystallin family. Monomer.

In terms of biological role, crystallins are the dominant structural components of the vertebrate eye lens. The sequence is that of Gamma-crystallin C (CRYGC) from Macaca mulatta (Rhesus macaque).